The sequence spans 1448 residues: DNA-directed RNA polymerase subunit beta' (1448 aa).

The Zn(2+) site is built by cysteine 66, cysteine 68, cysteine 81, and cysteine 84. Residues aspartate 474, aspartate 476, and aspartate 478 each contribute to the Mg(2+) site. Residues cysteine 814, cysteine 888, cysteine 895, and cysteine 898 each coordinate Zn(2+). The interval 1408 to 1448 (LEELQAAIGGDGESPSGDGAAGDGAPSEEDVEQIEASGSEN) is disordered.

Belongs to the RNA polymerase beta' chain family. In terms of assembly, the RNAP catalytic core consists of 2 alpha, 1 beta, 1 beta' and 1 omega subunit. When a sigma factor is associated with the core the holoenzyme is formed, which can initiate transcription. Mg(2+) is required as a cofactor. The cofactor is Zn(2+).

It carries out the reaction RNA(n) + a ribonucleoside 5'-triphosphate = RNA(n+1) + diphosphate. DNA-dependent RNA polymerase catalyzes the transcription of DNA into RNA using the four ribonucleoside triphosphates as substrates. This is DNA-directed RNA polymerase subunit beta' from Salinibacter ruber (strain DSM 13855 / M31).